Reading from the N-terminus, the 81-residue chain is uncharacterized protein (81 aa).

This is an uncharacterized protein from Dictyostelium discoideum (Social amoeba).